Reading from the N-terminus, the 461-residue chain is Glycerol-3-phosphate acyltransferase, chloroplastic (461 aa).

A chloroplast-targeting transit peptide spans 1–96 (MSMTGSSAYY…SPPNMSASVS (96 aa)). Residues 47–76 (LLSSTSSSSSSSISLRSSTAPSPSCSSVTP) are compositionally biased toward low complexity. Residues 47–88 (LLSSTSSSSSSSISLRSSTAPSPSCSSVTPKDNCLASAKHSP) are disordered. Residues 231–236 (HQTEAD) carry the HXXXXD motif motif.

The protein belongs to the GPAT/DAPAT family.

The protein localises to the plastid. It localises to the chloroplast stroma. The enzyme catalyses sn-glycerol 3-phosphate + an acyl-CoA = a 1-acyl-sn-glycero-3-phosphate + CoA. It participates in phospholipid metabolism; CDP-diacylglycerol biosynthesis; CDP-diacylglycerol from sn-glycerol 3-phosphate: step 1/3. Its function is as follows. Esterifies acyl-group from acyl-ACP to the sn-1 position of glycerol-3-phosphate. The enzyme from chilling-resistant plants discriminates against non-fluid palmitic acid and selects oleic acid whereas the enzyme from sensitive plants accepts both fatty acids. This Phaseolus vulgaris (Kidney bean) protein is Glycerol-3-phosphate acyltransferase, chloroplastic (PLSB).